Here is a 290-residue protein sequence, read N- to C-terminus: Protein translocase subunit SecF (290 aa).

6 helical membrane-spanning segments follow: residues 15–35, 131–151, 156–176, 184–204, 234–256, and 260–282; these read VFMILSLLFVIIGMYFFFTKG, KAILAAVLAIIVMLVYITVRF, AISAIINEAFVLLATISIFAI, SFIAAILTLLGYAINDNIIVF, TLYTVITTLLAITPLLIWGGVVL, and ILAIYLGIIIGTYSTIYIASAIL.

The protein belongs to the SecD/SecF family. SecF subfamily. In terms of assembly, forms a complex with SecD. Part of the essential Sec protein translocation apparatus which comprises SecA, SecYEG and auxiliary proteins SecDF. Other proteins may also be involved.

Its subcellular location is the cell inner membrane. Part of the Sec protein translocase complex. Interacts with the SecYEG preprotein conducting channel. SecDF uses the proton motive force (PMF) to complete protein translocation after the ATP-dependent function of SecA. In Dictyoglomus turgidum (strain DSM 6724 / Z-1310), this protein is Protein translocase subunit SecF.